The primary structure comprises 570 residues: Carotenoid cleavage dioxygenase 8, chloroplastic (570 aa).

The N-terminal 56 residues, 1-56 (MASLITTKAMMSHHHVLSSTRITTLYSDNSIGDQQIKTKPQVPHRLFARRIFGVTR), are a transit peptide targeting the chloroplast. Positions 254, 305, 372, and 563 each coordinate Fe cation.

The protein belongs to the carotenoid oxygenase family. The cofactor is Fe(2+). Expressed in flowers, siliques, inflorescence stems, petiole and leaves, and at a much higher level in roots.

Its subcellular location is the plastid. The protein resides in the chloroplast. It carries out the reaction 9-cis-10'-apo-beta-carotenal + 2 O2 = (2E,4E,6E)-7-hydroxy-4-methylhepta-2,4,6-trienal + (11R)-carlactone. The catalysed reaction is all-trans-10'-apo-beta-carotenal + O2 = (2E,4E,6E)-4-methylocta-2,4,6-trienedial + 13-apo-beta-carotenone. Its function is as follows. Involved in strigolactones biosynthesis by cleaving the C(27) 9-cis-10'-apo-beta-carotenal produced by CCD7. Produces the C(19) carlactone and a C(8) hydroxyaldehyde. Also shows lower activity with all-trans-10'-apo-beta-carotenal producing a C(9) dialdehyde and the C(18) 13-apo-beta-carotenone. Strigolactones are hormones that inhibit tillering and shoot branching through the MAX-dependent pathway, contribute to the regulation of shoot architectural response to phosphate-limiting conditions and function as rhizosphere signal that stimulates hyphal branching of arbuscular mycorrhizal fungi and trigger seed germination of root parasitic weeds. Also active on other carotenoid substrates like licopene or zeaxanthin. The chain is Carotenoid cleavage dioxygenase 8, chloroplastic from Arabidopsis thaliana (Mouse-ear cress).